Reading from the N-terminus, the 125-residue chain is Ribonuclease pancreatic (125 aa).

Substrate-binding residues include K7 and R10. The active-site Proton acceptor is the H12. Cystine bridges form between C27–C85, C41–C96, C59–C111, and C66–C73. N-linked (GlcNAc...) asparagine glycosylation occurs at N35. Substrate-binding positions include K42 to T46, K67, and R86. The Proton donor role is filled by H120.

This sequence belongs to the pancreatic ribonuclease family. In terms of assembly, monomer. Interacts with and forms tight 1:1 complexes with RNH1. Dimerization of two such complexes may occur. Interaction with RNH1 inhibits this protein. Pancreas.

The protein resides in the secreted. The catalysed reaction is an [RNA] containing cytidine + H2O = an [RNA]-3'-cytidine-3'-phosphate + a 5'-hydroxy-ribonucleotide-3'-[RNA].. It carries out the reaction an [RNA] containing uridine + H2O = an [RNA]-3'-uridine-3'-phosphate + a 5'-hydroxy-ribonucleotide-3'-[RNA].. Functionally, endonuclease that catalyzes the cleavage of RNA on the 3' side of pyrimidine nucleotides. Acts on single-stranded and double-stranded RNA. This Spalax ehrenbergi (Middle East blind mole rat) protein is Ribonuclease pancreatic (RNASE1).